An 80-amino-acid polypeptide reads, in one-letter code: Pigment-dispersing hormone type 2 (80 aa).

The N-terminal stretch at Met-1–Ala-23 is a signal peptide. Ala-77 is modified (alanine amide).

This sequence belongs to the arthropod PDH family. As to expression, eyestalk.

Its subcellular location is the secreted. In terms of biological role, the pigment-dispersing hormone causes the migration of the distal retinal pigment into the proximal end of the pigment chromatophore cells and thus decreases the amount of light entering the retinulas. May also function as a neurotransmitter and/or neuromodulator. This chain is Pigment-dispersing hormone type 2 (PDH2), found in Penaeus vannamei (Whiteleg shrimp).